A 480-amino-acid polypeptide reads, in one-letter code: Gasdermin-C2 (480 aa).

Positions 1 to 226 are triggers pyroptosis; the sequence is MGYSFDRASK…TCVILPSATK (226 aa).

The protein belongs to the gasdermin family. In terms of assembly, homooligomer; homooligomeric ring-shaped pore complex containing 27-28 subunits when inserted in the membrane. Cleavage by CASP8 relieves autoinhibition by releasing the N-terminal moiety (Gasdermin-C2, N-terminal) that initiates pyroptosis. In terms of processing, palmitoylated.

It localises to the cytoplasm. The protein localises to the cytosol. Its subcellular location is the cell membrane. The full-length protein before cleavage is inactive: intramolecular interactions between N- and C-terminal domains mediate autoinhibition in the absence of activation signal. The intrinsic pyroptosis-inducing activity is carried by the released N-terminal moiety (Gasdermin-C2, N-terminal) following cleavage by caspase CASP8 in response to type-2 immunity following worm infection. Functionally, this form constitutes the precursor of the pore-forming protein: upon cleavage, the released N-terminal moiety (Gasdermin-C2, N-terminal) binds to membranes and forms pores, triggering pyroptosis. In terms of biological role, pore-forming protein that causes membrane permeabilization and pyroptosis in response to type-2 immunity. Produced by the cleavage of gasdermin-C2 in response to type-2 immunity following worm infection. After cleavage, moves to the plasma membrane where it strongly binds to membrane inner leaflet lipids. Homooligomerizes within the membrane and forms pores of 10-15 nanometers (nm) of inner diameter, triggering pyroptosis and lytic cell death in enterocytes. The polypeptide is Gasdermin-C2 (Mus musculus (Mouse)).